The sequence spans 295 residues: Bifunctional protein FolD (295 aa).

NADP(+) is bound by residues 167–169 (GRS), Ser-192, and Ile-233.

It belongs to the tetrahydrofolate dehydrogenase/cyclohydrolase family. In terms of assembly, homodimer.

The enzyme catalyses (6R)-5,10-methylene-5,6,7,8-tetrahydrofolate + NADP(+) = (6R)-5,10-methenyltetrahydrofolate + NADPH. It carries out the reaction (6R)-5,10-methenyltetrahydrofolate + H2O = (6R)-10-formyltetrahydrofolate + H(+). It participates in one-carbon metabolism; tetrahydrofolate interconversion. In terms of biological role, catalyzes the oxidation of 5,10-methylenetetrahydrofolate to 5,10-methenyltetrahydrofolate and then the hydrolysis of 5,10-methenyltetrahydrofolate to 10-formyltetrahydrofolate. In Paramagnetospirillum magneticum (strain ATCC 700264 / AMB-1) (Magnetospirillum magneticum), this protein is Bifunctional protein FolD.